Here is a 343-residue protein sequence, read N- to C-terminus: Phosphoglycerate mutase-like protein 2 (343 aa).

The transit peptide at 1–35 directs the protein to the chloroplast; sequence MIHQSMTSNLSFYISSVSHLSSPLPSLSRLSLRCC. The active-site Tele-phosphohistidine intermediate is histidine 65. Glutamate 177 acts as the Proton donor/acceptor in catalysis. A disordered region spans residues 322 to 343; it reads MTNYPGTILTGEDASSDIADQK.

Belongs to the phosphoglycerate mutase family.

The protein localises to the plastid. It is found in the chloroplast. In terms of biological role, may play a role in carbohydrates metabolism. The protein is Phosphoglycerate mutase-like protein 2 of Arabidopsis thaliana (Mouse-ear cress).